Reading from the N-terminus, the 768-residue chain is Translation factor GUF1 homolog, mitochondrial (768 aa).

The N-terminal 29 residues, Met1–Cys29, are a transit peptide targeting the mitochondrion. Residues Ser110–Ser293 form the tr-type G domain. GTP is bound by residues Ala119–Thr126, Asp184–His188, and Thr238–Asp241.

It belongs to the TRAFAC class translation factor GTPase superfamily. Classic translation factor GTPase family. LepA subfamily.

The protein localises to the mitochondrion inner membrane. The enzyme catalyses GTP + H2O = GDP + phosphate + H(+). Promotes mitochondrial protein synthesis. May act as a fidelity factor of the translation reaction, by catalyzing a one-codon backward translocation of tRNAs on improperly translocated ribosomes. Binds to mitochondrial ribosomes in a GTP-dependent manner. This Trypanosoma brucei brucei (strain 927/4 GUTat10.1) protein is Translation factor GUF1 homolog, mitochondrial.